Reading from the N-terminus, the 178-residue chain is SPbeta prophage-derived uncharacterized protein YonC (178 aa).

The chain is SPbeta prophage-derived uncharacterized protein YonC (yonC) from Bacillus subtilis (strain 168).